Reading from the N-terminus, the 1132-residue chain is DNA-directed RNA polymerase subunit beta (1132 aa).

It belongs to the RNA polymerase beta chain family. The RNAP catalytic core consists of 2 alpha, 1 beta, 1 beta' and 1 omega subunit. When a sigma factor is associated with the core the holoenzyme is formed, which can initiate transcription.

It catalyses the reaction RNA(n) + a ribonucleoside 5'-triphosphate = RNA(n+1) + diphosphate. DNA-dependent RNA polymerase catalyzes the transcription of DNA into RNA using the four ribonucleoside triphosphates as substrates. This is DNA-directed RNA polymerase subunit beta from Carboxydothermus hydrogenoformans (strain ATCC BAA-161 / DSM 6008 / Z-2901).